A 347-amino-acid polypeptide reads, in one-letter code: MASVTSEKCVILSDGTEYDVTNYLVANKDAADLLRRYHRQEVADILNATSKSKHSEAVVEILKSAKVPLKNKEFSDLVDQNIGVGYGNEFIVKPTDLDKDFEKNHFLDLKKPLLPQILFGNIKKDVYLDQVHRPRHYRGSGSAPLFGNFLEPLTKTPWYMIPLIWVPCVTYGFLYACTGIPFSVAITFFIIGLFTWTLVEYTMHRFLFHLDEYTPDHPIFLTMHFAFHGCHHFLPADKYRLVMPPALFLIFATPWYHFIQLVLPHYIGVAGFSGAILGYVFYDLTHYFLHHRRMPNAYLTDLKTWHLDHHYKDYKSAYGITSWFWDRVFGTEGPLFNEQGKISTKAK.

Residues 1 to 156 (MASVTSEKCV…GNFLEPLTKT (156 aa)) are Cytoplasmic-facing. The helical transmembrane segment at 157-177 (PWYMIPLIWVPCVTYGFLYAC) threads the bilayer. A topological domain (lumenal) is located at residue Thr-178. A helical transmembrane segment spans residues 179 to 199 (GIPFSVAITFFIIGLFTWTLV). The Cytoplasmic portion of the chain corresponds to 200-238 (EYTMHRFLFHLDEYTPDHPIFLTMHFAFHGCHHFLPADK). The Zn(2+) site is built by His-204, His-209, His-228, His-231, and His-232. A helical membrane pass occupies residues 239–259 (YRLVMPPALFLIFATPWYHFI). Residue Gln-260 is a topological domain, lumenal. The helical transmembrane segment at 261–281 (LVLPHYIGVAGFSGAILGYVF) threads the bilayer. Topologically, residues 282 to 347 (YDLTHYFLHH…EQGKISTKAK (66 aa)) are cytoplasmic. Positions 286, 290, 306, 309, and 310 each coordinate Zn(2+).

Belongs to the sterol desaturase family. SCS7 subfamily. The cofactor is Zn(2+).

The protein localises to the endoplasmic reticulum membrane. It participates in sphingolipid metabolism. Ceramide hydroxylase involved in the hydroxylation of sphingolipid-associated very long chain fatty acids. Postulated to hydroxylate the very long chain fatty acid of dihydroceramides and phytoceramides at C-2. This chain is Ceramide very long chain fatty acid hydroxylase scs7, found in Schizosaccharomyces pombe (strain 972 / ATCC 24843) (Fission yeast).